Consider the following 78-residue polypeptide: MPKRILQGVVVSDKNEKTVVVRVERRFAHPLLQKTVRRSKKYKAHDESNQYKIGDVVSIEECAPISKDKCWTVVSAQA.

It belongs to the universal ribosomal protein uS17 family. In terms of assembly, part of the 30S ribosomal subunit.

Functionally, one of the primary rRNA binding proteins, it binds specifically to the 5'-end of 16S ribosomal RNA. In Allorhizobium ampelinum (strain ATCC BAA-846 / DSM 112012 / S4) (Agrobacterium vitis (strain S4)), this protein is Small ribosomal subunit protein uS17.